The chain runs to 119 residues: Beta-2-microglobulin (119 aa).

Residues 1-20 form the signal peptide; sequence MACFVVVALLVLLSLSGLEA. An Ig-like C1-type domain is found at 25 to 114; the sequence is PKIQVYSRHP…VTFSTPKTVK (90 aa). Cys45 and Cys100 are disulfide-bonded.

It belongs to the beta-2-microglobulin family. Heterodimer of an alpha chain and a beta chain. Beta-2-microglobulin is the beta-chain of major histocompatibility complex class I molecules.

The protein localises to the secreted. Its function is as follows. Component of the class I major histocompatibility complex (MHC). Involved in the presentation of peptide antigens to the immune system. The protein is Beta-2-microglobulin (B2M) of Leontopithecus chrysopygus (Golden-rumped lion tamarin).